Consider the following 455-residue polypeptide: Pentatricopeptide repeat-containing protein At3g26630, chloroplastic (455 aa).

The transit peptide at 1–19 (MAAPSPSSPPNLLSPPPFR) directs the protein to the chloroplast. 11 PPR repeats span residues 51–81 (DQLL…LQSP), 82–117 (STFT…QSQF), 118–152 (DKFT…GFFN), 153–187 (DVFF…SIVS), 188–214 (WTTM…MPMR), 215–249 (NVVS…DVKP), 250–284 (NEFT…GFVL), 285–315 (DCFL…MQGK), 316–350 (SLAT…ASVE), 352–387 (DAIT…GISP), and 388–418 (IREH…MDSD).

This sequence belongs to the PPR family. PCMP-A subfamily.

It is found in the plastid. It localises to the chloroplast. This chain is Pentatricopeptide repeat-containing protein At3g26630, chloroplastic (PCMP-A6), found in Arabidopsis thaliana (Mouse-ear cress).